A 689-amino-acid polypeptide reads, in one-letter code: Glycine--tRNA ligase beta subunit (689 aa).

The protein belongs to the class-II aminoacyl-tRNA synthetase family. In terms of assembly, tetramer of two alpha and two beta subunits.

The protein resides in the cytoplasm. The catalysed reaction is tRNA(Gly) + glycine + ATP = glycyl-tRNA(Gly) + AMP + diphosphate. This is Glycine--tRNA ligase beta subunit from Escherichia coli O8 (strain IAI1).